Reading from the N-terminus, the 89-residue chain is HssA/B-like protein 22 (89 aa).

This sequence belongs to the hssA/B family.

The polypeptide is HssA/B-like protein 22 (hssl22) (Dictyostelium discoideum (Social amoeba)).